The primary structure comprises 471 residues: MENFKHLPEPFRIRVIEPVKRTTRAYREEAIIKSGMNPFLLDSEDVFIDLLTDSGTGAVTQSMQAAMMRGDEAYSGSRSYYALAESVKNIFGYQYTIPTHQGRGAEQIYIPVLIKKREQEKGLDRSKMVAFSNYFFDTTQGHSQINGCTVRNVYIKEAFDTGVRYDFKGNFDLEGLERGIEEVGPNNVPYIVATITSNSAGGQPVSLANLKVMYSIAKKYDIPVVMDSARFAENAYFIKQREAEYKDWTIEQITRETYKYADMLAMSAKKDAMVPMGGLLCMKDDSFFDVYTECRTLCVVQEGFPTYGGLEGGAMERLAVGLYDGMNLDWLAYRIAQVQYLVDGLEEIGVVCQQAGGHAAFVDAGKLLPHIPADQFPAQALACELYKVAGIRAVEIGSFLLGRDPKTGKQLPCPAELLRLTIPRATYTQTHMDFIIEAFKHVKENAANIKGLTFTYEPKVLRHFTAKLKEV.

Lys-5, Lys-115, and Lys-156 each carry N6-acetyllysine. Position 270 is an N6-(pyridoxal phosphate)lysine (Lys-270). Position 450 is an N6-acetyllysine (Lys-450).

Belongs to the beta-eliminating lyase family. Homotetramer. Pyridoxal 5'-phosphate serves as cofactor.

It catalyses the reaction L-tryptophan + H2O = indole + pyruvate + NH4(+). It participates in amino-acid degradation; L-tryptophan degradation via pyruvate pathway; indole and pyruvate from L-tryptophan: step 1/1. This chain is Tryptophanase, found in Escherichia coli O6:H1 (strain CFT073 / ATCC 700928 / UPEC).